We begin with the raw amino-acid sequence, 290 residues long: Ribosomal protein L11 methyltransferase (290 aa).

Positions 136, 159, 181, and 228 each coordinate S-adenosyl-L-methionine.

The protein belongs to the methyltransferase superfamily. PrmA family.

The protein resides in the cytoplasm. The enzyme catalyses L-lysyl-[protein] + 3 S-adenosyl-L-methionine = N(6),N(6),N(6)-trimethyl-L-lysyl-[protein] + 3 S-adenosyl-L-homocysteine + 3 H(+). Methylates ribosomal protein L11. The protein is Ribosomal protein L11 methyltransferase of Allorhizobium ampelinum (strain ATCC BAA-846 / DSM 112012 / S4) (Agrobacterium vitis (strain S4)).